A 625-amino-acid chain; its full sequence is Glucose dehydrogenase [FAD, quinone] (625 aa).

The signal sequence occupies residues 1–42 (MATSPSSCDCLVGVPTGPTLASTCGGSAFMLFMGLLEVFIRS). Position 66–95 (66–95 (DFIVIGGGSAGSVVASRLSEVPQWKVLLIE)) interacts with FAD. The active-site Proton acceptor is H544. Residue U613 is a non-standard amino acid, selenocysteine.

Belongs to the GMC oxidoreductase family. FAD serves as cofactor.

Its subcellular location is the secreted. It catalyses the reaction a quinone + D-glucose = D-glucono-1,5-lactone + a quinol. The polypeptide is Glucose dehydrogenase [FAD, quinone] (Gld) (Drosophila pseudoobscura pseudoobscura (Fruit fly)).